The primary structure comprises 361 residues: Teichoic acids export ATP-binding protein TagH (361 aa).

The ABC transporter domain occupies 13–246 (TKEYDLYKSQ…YREFTKWFKG (234 aa)). 60-67 (GVNGSGKS) is a binding site for ATP. A unknown region spans residues 247–361 (QSKKEKKHFQ…HDTNATSGVK (115 aa)).

It belongs to the ABC transporter superfamily. Teichoic acids exporter (TC 3.A.1.104.1) family. As to quaternary structure, the complex is composed of two ATP-binding proteins (TagH) and two transmembrane proteins (TagG).

The protein localises to the cell membrane. The catalysed reaction is ATP + H2O + teichoic acidSide 1 = ADP + phosphate + teichoic acidSide 2.. In terms of biological role, part of the ABC transporter complex TagGH involved in teichoic acids export. Responsible for energy coupling to the transport system. This chain is Teichoic acids export ATP-binding protein TagH, found in Levilactobacillus brevis (strain ATCC 367 / BCRC 12310 / CIP 105137 / JCM 1170 / LMG 11437 / NCIMB 947 / NCTC 947) (Lactobacillus brevis).